A 270-amino-acid chain; its full sequence is 3-methyl-2-oxobutanoate hydroxymethyltransferase (270 aa).

2 residues coordinate Mg(2+): Asp41 and Asp80. 3-methyl-2-oxobutanoate-binding positions include 41 to 42 (DS), Asp80, and Lys109. Glu111 lines the Mg(2+) pocket. Glu178 (proton acceptor) is an active-site residue.

It belongs to the PanB family. As to quaternary structure, homodecamer; pentamer of dimers. It depends on Mg(2+) as a cofactor.

It localises to the cytoplasm. The enzyme catalyses 3-methyl-2-oxobutanoate + (6R)-5,10-methylene-5,6,7,8-tetrahydrofolate + H2O = 2-dehydropantoate + (6S)-5,6,7,8-tetrahydrofolate. The protein operates within cofactor biosynthesis; (R)-pantothenate biosynthesis; (R)-pantoate from 3-methyl-2-oxobutanoate: step 1/2. Its function is as follows. Catalyzes the reversible reaction in which hydroxymethyl group from 5,10-methylenetetrahydrofolate is transferred onto alpha-ketoisovalerate to form ketopantoate. The protein is 3-methyl-2-oxobutanoate hydroxymethyltransferase of Thermotoga maritima (strain ATCC 43589 / DSM 3109 / JCM 10099 / NBRC 100826 / MSB8).